The sequence spans 357 residues: UDP-N-acetylglucosamine--N-acetylmuramyl-(pentapeptide) pyrophosphoryl-undecaprenol N-acetylglucosamine transferase (357 aa).

Residues 14-16, Arg-168, Ser-198, and Gln-292 contribute to the UDP-N-acetyl-alpha-D-glucosamine site; that span reads TAG.

This sequence belongs to the glycosyltransferase 28 family. MurG subfamily.

Its subcellular location is the cell membrane. The catalysed reaction is di-trans,octa-cis-undecaprenyl diphospho-N-acetyl-alpha-D-muramoyl-L-alanyl-D-glutamyl-meso-2,6-diaminopimeloyl-D-alanyl-D-alanine + UDP-N-acetyl-alpha-D-glucosamine = di-trans,octa-cis-undecaprenyl diphospho-[N-acetyl-alpha-D-glucosaminyl-(1-&gt;4)]-N-acetyl-alpha-D-muramoyl-L-alanyl-D-glutamyl-meso-2,6-diaminopimeloyl-D-alanyl-D-alanine + UDP + H(+). Its pathway is cell wall biogenesis; peptidoglycan biosynthesis. Cell wall formation. Catalyzes the transfer of a GlcNAc subunit on undecaprenyl-pyrophosphoryl-MurNAc-pentapeptide (lipid intermediate I) to form undecaprenyl-pyrophosphoryl-MurNAc-(pentapeptide)GlcNAc (lipid intermediate II). The sequence is that of UDP-N-acetylglucosamine--N-acetylmuramyl-(pentapeptide) pyrophosphoryl-undecaprenol N-acetylglucosamine transferase from Oceanobacillus iheyensis (strain DSM 14371 / CIP 107618 / JCM 11309 / KCTC 3954 / HTE831).